The sequence spans 111 residues: Large ribosomal subunit protein uL22 (111 aa).

It belongs to the universal ribosomal protein uL22 family. As to quaternary structure, part of the 50S ribosomal subunit.

Functionally, this protein binds specifically to 23S rRNA; its binding is stimulated by other ribosomal proteins, e.g. L4, L17, and L20. It is important during the early stages of 50S assembly. It makes multiple contacts with different domains of the 23S rRNA in the assembled 50S subunit and ribosome. In terms of biological role, the globular domain of the protein is located near the polypeptide exit tunnel on the outside of the subunit, while an extended beta-hairpin is found that lines the wall of the exit tunnel in the center of the 70S ribosome. This chain is Large ribosomal subunit protein uL22, found in Citrifermentans bemidjiense (strain ATCC BAA-1014 / DSM 16622 / JCM 12645 / Bem) (Geobacter bemidjiensis).